The sequence spans 208 residues: Ras-related protein M-Ras (208 aa).

Residues Asp-21, Gly-22, Gly-23, Val-24, Gly-25, Lys-26, Ser-27, Ala-28, Phe-38, Val-39, Pro-40, Tyr-42, Pro-44, and Thr-45 each contribute to the GTP site. Ser-27 contacts Mg(2+). An Effector region motif is present at residues 42 to 50 (YDPTIEDSY). Mg(2+)-binding residues include Thr-45 and Asp-67. Positions 70, 126, 127, 129, 156, 157, and 158 each coordinate GTP. The residue at position 205 (Cys-205) is a Cysteine methyl ester. Cys-205 carries S-geranylgeranyl cysteine lipidation. Residues 206–208 (VIL) constitute a propeptide, removed in mature form.

The protein belongs to the small GTPase superfamily. Ras family. In terms of assembly, component of the SHOC2-MRAS-PP1c (SMP) holophosphatase complex consisting of SHOC2, GTP-bound M-Ras/MRAS and the catalytic subunit of protein phosphatase 1 (either PPP1CA, PPP1CB or PPP1CC). Interacts (active GTP-bound form) with both SHOC2 and PP1c (all isoforms) to form a tertiary complex; SHOC2 and PP1c preferably bind M-Ras/MRAS, but they also bind K-Ras/KRAS, N-Ras/NRAS and H-Ras/HRAS. Interacts with RGL3. Interacts (active GTP-bound form preferentially) with RGS14. Mg(2+) serves as cofactor. As to expression, expression highly restricted to the brain and heart.

It localises to the cell membrane. The enzyme catalyses GTP + H2O = GDP + phosphate + H(+). Signal transducer in the Ras-MAPK signaling pathway that regulates cell proliferation and survival. Core component of the SHOC2-MRAS-PP1c (SMP) holophosphatase complex that regulates the MAPK pathway activation. The formation of the SMP complex only occurs when MRAS is GTP-bound. MRAS has low intrinsic GTPase activity and may require additional factors for activation. The SMP complex specifically dephosphorylates the inhibitory phosphorylation at 'Ser-259' of RAF1 kinase, 'Ser-365' of BRAF kinase and 'Ser-214' of ARAF kinase, stimulating their kinase activities. The sequence is that of Ras-related protein M-Ras (MRAS) from Homo sapiens (Human).